Here is a 555-residue protein sequence, read N- to C-terminus: Adenine deaminase (555 aa).

Belongs to the metallo-dependent hydrolases superfamily. Adenine deaminase family. Requires Mn(2+) as cofactor.

It catalyses the reaction adenine + H2O + H(+) = hypoxanthine + NH4(+). This is Adenine deaminase from Methanosarcina mazei (strain ATCC BAA-159 / DSM 3647 / Goe1 / Go1 / JCM 11833 / OCM 88) (Methanosarcina frisia).